The chain runs to 701 residues: Potassium-transporting ATPase ATP-binding subunit 1 (701 aa).

The tract at residues 1 to 26 (MNPVAPTRKVKPPRNRPSDRRQARKK) is disordered. Helical transmembrane passes span 57 to 77 (MFVVWVATLVTLAVTINPDLF), 90 to 110 (GLLTGILFFTVWFANFAEAVA), 241 to 261 (VALTVLLAVLSLVFLFVIATL), and 278 to 298 (IALLVALIPTTIGGLLSAIGI). The 4-aspartylphosphate intermediate role is filled by Asp329. ATP-binding positions include Asp366, Glu370, 397 to 404 (FSAKTRMS), and Lys416. Mg(2+) contacts are provided by Asp539 and Asp543. Transmembrane regions (helical) follow at residues 599-619 (FSIANDIAKYFAIIPVIFAAA), 635-655 (AVLSALIYNALIIPALIPLAL), and 681-701 (VIAPFIAIKLIDILITLVGLA).

This sequence belongs to the cation transport ATPase (P-type) (TC 3.A.3) family. Type IA subfamily. The system is composed of three essential subunits: KdpA, KdpB and KdpC.

The protein localises to the cell inner membrane. The catalysed reaction is K(+)(out) + ATP + H2O = K(+)(in) + ADP + phosphate + H(+). Functionally, part of the high-affinity ATP-driven potassium transport (or Kdp) system, which catalyzes the hydrolysis of ATP coupled with the electrogenic transport of potassium into the cytoplasm. This subunit is responsible for energy coupling to the transport system and for the release of the potassium ions to the cytoplasm. This chain is Potassium-transporting ATPase ATP-binding subunit 1, found in Nostoc sp. (strain PCC 7120 / SAG 25.82 / UTEX 2576).